Consider the following 84-residue polypeptide: Large ribosomal subunit protein bL27 (84 aa).

The tract at residues 1-20 (MAHKKAGGSTRNGRDSNPKY) is disordered.

It belongs to the bacterial ribosomal protein bL27 family.

The protein is Large ribosomal subunit protein bL27 of Francisella philomiragia subsp. philomiragia (strain ATCC 25017 / CCUG 19701 / FSC 153 / O#319-036).